Consider the following 1462-residue polypeptide: DNA polymerase III PolC-type (1462 aa).

An Exonuclease domain is found at 424-580 (YVVFDVETTG…YDAEATGRLL (157 aa)).

This sequence belongs to the DNA polymerase type-C family. PolC subfamily.

Its subcellular location is the cytoplasm. The enzyme catalyses DNA(n) + a 2'-deoxyribonucleoside 5'-triphosphate = DNA(n+1) + diphosphate. Required for replicative DNA synthesis. This DNA polymerase also exhibits 3' to 5' exonuclease activity. The sequence is that of DNA polymerase III PolC-type from Streptococcus sanguinis (strain SK36).